A 359-amino-acid chain; its full sequence is NADH-quinone oxidoreductase subunit H (359 aa).

The next 8 membrane-spanning stretches (helical) occupy residues 19-39 (IGWF…FIAL), 94-114 (FLFV…FAVL), 127-147 (VGLF…LAAG), 166-186 (IVSY…LAGT), 202-222 (FMHW…IYFI), 266-286 (MFMV…SPLP), 301-321 (VWGA…QMWL), and 337-357 (CWKV…IWVI).

The protein belongs to the complex I subunit 1 family. In terms of assembly, NDH-1 is composed of 14 different subunits. Subunits NuoA, H, J, K, L, M, N constitute the membrane sector of the complex.

The protein resides in the cell inner membrane. It catalyses the reaction a quinone + NADH + 5 H(+)(in) = a quinol + NAD(+) + 4 H(+)(out). In terms of biological role, NDH-1 shuttles electrons from NADH, via FMN and iron-sulfur (Fe-S) centers, to quinones in the respiratory chain. The immediate electron acceptor for the enzyme in this species is believed to be ubiquinone. Couples the redox reaction to proton translocation (for every two electrons transferred, four hydrogen ions are translocated across the cytoplasmic membrane), and thus conserves the redox energy in a proton gradient. This subunit may bind ubiquinone. The sequence is that of NADH-quinone oxidoreductase subunit H from Chlorobaculum parvum (strain DSM 263 / NCIMB 8327) (Chlorobium vibrioforme subsp. thiosulfatophilum).